The sequence spans 104 residues: MNETEFHKLVDIQMQNIEEAIDESEADIDYEVTGNVMTLEFENRSQIIINRQEPMREIWLASKSGGFHFKLVDDKWTCSKTGMALFEMVKEECEKHADEEINWV.

It belongs to the frataxin family.

Involved in iron-sulfur (Fe-S) cluster assembly. May act as a regulator of Fe-S biogenesis. This Vibrio atlanticus (strain LGP32) (Vibrio splendidus (strain Mel32)) protein is Iron-sulfur cluster assembly protein CyaY.